The following is a 98-amino-acid chain: Large ribosomal subunit protein uL23 (98 aa).

Belongs to the universal ribosomal protein uL23 family. Part of the 50S ribosomal subunit. Contacts protein L29, and trigger factor when it is bound to the ribosome.

Functionally, one of the early assembly proteins it binds 23S rRNA. One of the proteins that surrounds the polypeptide exit tunnel on the outside of the ribosome. Forms the main docking site for trigger factor binding to the ribosome. The chain is Large ribosomal subunit protein uL23 from Chromohalobacter salexigens (strain ATCC BAA-138 / DSM 3043 / CIP 106854 / NCIMB 13768 / 1H11).